The chain runs to 250 residues: Phosphoribosylaminoimidazole-succinocarboxamide synthase (250 aa).

It belongs to the SAICAR synthetase family.

The catalysed reaction is 5-amino-1-(5-phospho-D-ribosyl)imidazole-4-carboxylate + L-aspartate + ATP = (2S)-2-[5-amino-1-(5-phospho-beta-D-ribosyl)imidazole-4-carboxamido]succinate + ADP + phosphate + 2 H(+). Its pathway is purine metabolism; IMP biosynthesis via de novo pathway; 5-amino-1-(5-phospho-D-ribosyl)imidazole-4-carboxamide from 5-amino-1-(5-phospho-D-ribosyl)imidazole-4-carboxylate: step 1/2. The polypeptide is Phosphoribosylaminoimidazole-succinocarboxamide synthase (Chloroflexus aggregans (strain MD-66 / DSM 9485)).